A 255-amino-acid chain; its full sequence is Proteasome subunit alpha type-3 (255 aa).

Ser-2 carries the post-translational modification N-acetylserine. Residues Lys-57, Lys-206, and Lys-230 each carry the N6-acetyllysine modification. Phosphoserine is present on residues Ser-243 and Ser-250.

Belongs to the peptidase T1A family. The 26S proteasome consists of a 20S proteasome core and two 19S regulatory subunits. The 20S proteasome core is a barrel-shaped complex made of 28 subunits that are arranged in four stacked rings. The two outer rings are each formed by seven alpha subunits, and the two inner rings are formed by seven beta subunits. The proteolytic activity is exerted by three beta-subunits PSMB5, PSMB6 and PSMB7. Interacts with AURKB. Interacts with CDKN1A. Interacts with MDM2 and RB1. Interacts with the C-terminus of TBXA2R isoform 2. Interacts with DNAJB2. As to expression, detected in liver (at protein level).

Its subcellular location is the cytoplasm. The protein localises to the nucleus. Component of the 20S core proteasome complex involved in the proteolytic degradation of most intracellular proteins. This complex plays numerous essential roles within the cell by associating with different regulatory particles. Associated with two 19S regulatory particles, forms the 26S proteasome and thus participates in the ATP-dependent degradation of ubiquitinated proteins. The 26S proteasome plays a key role in the maintenance of protein homeostasis by removing misfolded or damaged proteins that could impair cellular functions, and by removing proteins whose functions are no longer required. Associated with the PA200 or PA28, the 20S proteasome mediates ubiquitin-independent protein degradation. This type of proteolysis is required in several pathways including spermatogenesis (20S-PA200 complex) or generation of a subset of MHC class I-presented antigenic peptides (20S-PA28 complex). Binds to the C-terminus of CDKN1A and thereby mediates its degradation. Negatively regulates the membrane trafficking of the cell-surface thromboxane A2 receptor (TBXA2R) isoform 2. This Mus musculus (Mouse) protein is Proteasome subunit alpha type-3 (Psma3).